The primary structure comprises 561 residues: Urocanate hydratase (561 aa).

NAD(+)-binding positions include 52–53 (GG), glutamine 130, 176–178 (GMG), glutamate 196, arginine 201, 242–243 (NA), 263–267 (QTSAH), 273–274 (YL), and tyrosine 322. Cysteine 410 is a catalytic residue. Residue glycine 492 coordinates NAD(+).

This sequence belongs to the urocanase family. Requires NAD(+) as cofactor.

Its subcellular location is the cytoplasm. It catalyses the reaction 4-imidazolone-5-propanoate = trans-urocanate + H2O. It participates in amino-acid degradation; L-histidine degradation into L-glutamate; N-formimidoyl-L-glutamate from L-histidine: step 2/3. In terms of biological role, catalyzes the conversion of urocanate to 4-imidazolone-5-propionate. The chain is Urocanate hydratase from Enterobacter sp. (strain 638).